The chain runs to 344 residues: Heat-inducible transcription repressor HrcA (344 aa).

It belongs to the HrcA family.

Negative regulator of class I heat shock genes (grpE-dnaK-dnaJ and groELS operons). Prevents heat-shock induction of these operons. This chain is Heat-inducible transcription repressor HrcA, found in Desulforudis audaxviator (strain MP104C).